The sequence spans 983 residues: Eukaryotic translation initiation factor 4E transporter (983 aa).

Residues 1-22 form a disordered region; that stretch reads MEKSVAETENGDAFLELKKLPT. At Ser-4 the chain carries Phosphoserine. The short motif at 29-35 is the YXXXXLphi motif element; that stretch reads YTKEELL. Residues 40–99 form a disordered region; that stretch reads RPYSKQRPSCLSEKYDSDGVWDPEKWHASLYPASGRSSPVESLKKESESDRPSLVRRIAD. Positions 52-66 are enriched in basic and acidic residues; sequence EKYDSDGVWDPEKWH. Phosphoserine is present on residues Ser-73 and Ser-77. Over residues 81 to 99 the composition is skewed to basic and acidic residues; it reads SLKKESESDRPSLVRRIAD. 4 positions are modified to phosphoserine: Ser-114, Ser-119, Ser-135, and Ser-137. The interaction with CSDE1 stretch occupies residues 130–160; it reads VSSRRSGSPLEKDSDGLRLLGGRRIGSGRII. A Nuclear localization signal motif is present at residues 194–210; it reads RREFGDSKRVFGERRRN. The disordered stretch occupies residues 206–229; the sequence is ERRRNDSYTEEEPEWFSAGPTSQS. Residues 218 to 239 are interaction with DDX6; the sequence is PEWFSAGPTSQSETIELTGFDD. 4 positions are modified to phosphoserine: Ser-300, Ser-344, Ser-352, and Ser-373. The tract at residues 341-360 is disordered; that stretch reads SNPSRSGSRSSSLGSTPHEE. Residues 344–355 are compositionally biased toward low complexity; that stretch reads SRSGSRSSSLGS. Residue Lys-409 forms a Glycyl lysine isopeptide (Lys-Gly) (interchain with G-Cter in SUMO2) linkage. Ser-416 carries the post-translational modification Phosphoserine. Residues 437 to 446 carry the Nuclear export signal motif; that stretch reads VEAGLKGLKV. Residues 447 to 489 are interaction with LSM14A; the sequence is DQQMKNSTPFMAEHLEETLSAASSNRQLKKDGDMTAFNKLVNT. Lys-485 bears the N6-acetyllysine mark. Phosphoserine is present on residues Ser-563 and Ser-586. 4 disordered regions span residues 585–616, 642–693, 708–800, and 906–951; these read PSPI…SAQM, FYQP…MLSP, REKT…VPGT, and LHPP…SSPV. A Nuclear export signal motif is present at residues 612 to 637; that stretch reads VSAQMSQLELQQAALEGLALPHDLAV. Basic and acidic residues predominate over residues 651–660; that stretch reads QVDRTRDGLR. Residue Ser-692 is modified to Phosphoserine. The interval 694–712 is interaction with PATL1; it reads SFTPTSVIRKMYESREKTK. Residues 724 to 734 show a composition bias toward basic and acidic residues; it reads DGKEDTQKTSE. Composition is skewed to polar residues over residues 735 to 774 and 910 to 928; these read ENLL…QTSR and GSSS…NVPS. 3 positions are modified to phosphoserine: Ser-751, Ser-919, and Ser-949. Residues 938-983 form an interaction with LSM14A region; it reads QLEHRTSQRSSSPVGLAKWFGSDVLQQPLPSMPTKVISVDELEYRQ.

This sequence belongs to the 4E-T/EIF4E-T family. In terms of assembly, interacts (via YXXXXLphi motif) with EIF4E. Interacts (via YXXXXLphi motif) with EIF4E2. Interacts with DDX6. Interacts with CSDE1/UNR. Interacts with CNOT1; promoting association with the CCR4-NOT complex. Interacts with LSM14A; promoting EIF4ENIF1 localization to P-bodies. Interacts with PATL1. Interacts with importin beta only in the presence of importin alpha, suggesting a direct interaction with importin alpha. Interacts with APOBEC3G in an RNA-dependent manner. Phosphorylation by MAPK8/JNK1 and or MAPK9/JNK2 in response to oxidative stress promotes P-body assembly. Phosphorylated during meiotic maturation. As to expression, highly expressed in developing oocytes.

It is found in the cytoplasm. The protein resides in the nucleus. Its subcellular location is the PML body. It localises to the nucleus speckle. Its function is as follows. EIF4E-binding protein that regulates translation and stability of mRNAs in processing bodies (P-bodies). Plays a key role in P-bodies to coordinate the storage of translationally inactive mRNAs in the cytoplasm and prevent their degradation. Acts as a binding platform for multiple RNA-binding proteins: promotes deadenylation of mRNAs via its interaction with the CCR4-NOT complex, and blocks decapping via interaction with eIF4E (EIF4E and EIF4E2), thereby protecting deadenylated and repressed mRNAs from degradation. Component of a multiprotein complex that sequesters and represses translation of proneurogenic factors during neurogenesis. Promotes miRNA-mediated translational repression. Involved in mRNA translational repression mediated by the miRNA effector TNRC6B by protecting TNRC6B-targeted mRNAs from decapping and subsequent decay. Required for the formation of P-bodies. Also acts as a nucleoplasmic shuttling protein, which mediates the nuclear import of EIF4E and DDX6 by a piggy-back mechanism. This chain is Eukaryotic translation initiation factor 4E transporter, found in Mus musculus (Mouse).